Reading from the N-terminus, the 494-residue chain is MQKKYVVALDQGTTSSRAIVFDHDANIVSVSQREFTQLYPNPGWVEHDPMEIWASQSSVLIESLARAGIHSDEVAAIGITNQRETTIIWEKDTGKPVYNAIVWQCRRSSEICEQLKAQGLEDYVRENTGLLLDPYFSGTKIKWILDNVPDARAKAKRGELLFGTVDTWLLWKLTEGKVHVTDPTNAARTLLFNIHSLSWDTKLLEALDIPAAMLPEVKPSCSVYGTTRIAGEGSEIPLAGIAGDQQAALFGQLCVEPGMAKNTYGTGCFLLMNTGNKAVRSSHGLLTTVAVGAQGEVNYALEGSVFMGGATIQWLRDELGLIRDASDTEYFASKVADTNGVYLVPAFVGLGAPYWDPNARGALFGLTRGANRNHIIRAALESIAYQSKDLLDAMIKDSGERLKSLKVDGGAVANDFLMQFQADITDVEVLRPSVCETTALGAAFLAGLAVGFWTSVTELKYKACIDKHFKPNIDASQRERLYAGWQDAVARTRS.

T13 provides a ligand contact to ADP. ATP-binding residues include T13, T14, and S15. Position 13 (T13) interacts with sn-glycerol 3-phosphate. Residue R17 participates in ADP binding. Residues R83, E84, Y135, and D244 each coordinate sn-glycerol 3-phosphate. Residues R83, E84, Y135, D244, and Q245 each coordinate glycerol. T266 and G309 together coordinate ADP. ATP is bound by residues T266, G309, Q313, and G410. Positions 410 and 414 each coordinate ADP.

Belongs to the FGGY kinase family.

The catalysed reaction is glycerol + ATP = sn-glycerol 3-phosphate + ADP + H(+). It participates in polyol metabolism; glycerol degradation via glycerol kinase pathway; sn-glycerol 3-phosphate from glycerol: step 1/1. Its activity is regulated as follows. Inhibited by fructose 1,6-bisphosphate (FBP). Its function is as follows. Key enzyme in the regulation of glycerol uptake and metabolism. Catalyzes the phosphorylation of glycerol to yield sn-glycerol 3-phosphate. The chain is Glycerol kinase from Shewanella sp. (strain ANA-3).